A 120-amino-acid chain; its full sequence is Histone H3-like centromeric protein cnp1 (120 aa).

The disordered stretch occupies residues 1–26 (MAKKSLMAEPGDPIPRPRKKRYRPGT). An H3-like region spans residues 14–120 (IPRPRKKRYR…MQLARRIRGA (107 aa)).

The protein belongs to the histone H3 family. As to quaternary structure, component of centromeric nucleosomes, where DNA is wrapped around a histone octamer core. The octamer contains two molecules each of H2A, H2B, cnp1/CENPA and H4 assembled in one cnp1-H4 heterotetramer and two H2A-H2B heterodimers. Interacts with the inner kinetochore. Component of centromeric nucleosomes. Interacts with mis6. Interacts with sim4. In terms of processing, ubiquitinated. Is degraded through ubiquitin-mediated proteolysis when not protected by its association to the kinetochore.

Its subcellular location is the nucleus. It localises to the chromosome. The protein resides in the centromere. Functionally, histone H3-like nucleosomal protein that is specifically found in centromeric nucleosomes. Replaces conventional H3 in the nucleosome core of centromeric chromatin that serves as an assembly site for the inner kinetochore. Required for recruitment and assembly of kinetochore proteins, mitotic progression and chromosome segregation. May serve as an epigenetic mark that propagates centromere identity through replication and cell division. The chain is Histone H3-like centromeric protein cnp1 (cnp1) from Schizosaccharomyces pombe (strain 972 / ATCC 24843) (Fission yeast).